Reading from the N-terminus, the 131-residue chain is Small ribosomal subunit protein uS8 (131 aa).

This sequence belongs to the universal ribosomal protein uS8 family. In terms of assembly, part of the 30S ribosomal subunit. Contacts proteins S5 and S12.

Its function is as follows. One of the primary rRNA binding proteins, it binds directly to 16S rRNA central domain where it helps coordinate assembly of the platform of the 30S subunit. The protein is Small ribosomal subunit protein uS8 of Helicobacter acinonychis (strain Sheeba).